The sequence spans 293 residues: SAGA-associated factor 29 (293 aa).

Positions 12 to 88 form a coiled coil; the sequence is ELLAELQRLL…KALDKIAEIK (77 aa). Positions 152–293 constitute an SGF29 C-terminal domain; sequence GDYVAKPGDK…VVACKETKKK (142 aa). 2 histone H3K4me3 N-terminus binding regions span residues 194–196 and 240–243; these read DID and QTTC. Residues 264–266 are histone H3K4me3 binding; sequence FED.

This sequence belongs to the SGF29 family. In terms of assembly, interacts with dimethylated and trimethylated 'Lys-4' of histone H3 (H3K4me2 and H3K4me3), with a preference for the trimethylated form (H3K4me3). Component of some SAGA-type complexes. Component of the ADA2A-containing complex (ATAC).

The protein localises to the nucleus. Its function is as follows. Chromatin reader component of some histone acetyltransferase (HAT) SAGA-type complexes like the TFTC-HAT, ATAC or STAGA complexes. SGF29 specifically recognizes and binds methylated 'Lys-4' of histone H3 (H3K4me), with a preference for trimethylated form (H3K4me3). In the SAGA-type complexes, SGF29 is required to recruit complexes to H3K4me. Also binds non-histone proteins that are methylated on Lys residues. The polypeptide is SAGA-associated factor 29 (Gallus gallus (Chicken)).